A 180-amino-acid polypeptide reads, in one-letter code: UPF0227 protein YcfP (180 aa).

It belongs to the UPF0227 family.

The polypeptide is UPF0227 protein YcfP (Salmonella paratyphi A (strain ATCC 9150 / SARB42)).